Reading from the N-terminus, the 685-residue chain is DNA-directed RNA polymerase subunit beta' (685 aa).

Residues Cys69, Cys71, Cys87, and Cys90 each coordinate Zn(2+). Mg(2+) is bound by residues Asp489, Asp491, and Asp493.

Belongs to the RNA polymerase beta' chain family. RpoC1 subfamily. In plastids the minimal PEP RNA polymerase catalytic core is composed of four subunits: alpha, beta, beta', and beta''. When a (nuclear-encoded) sigma factor is associated with the core the holoenzyme is formed, which can initiate transcription. It depends on Mg(2+) as a cofactor. Requires Zn(2+) as cofactor.

The protein resides in the plastid. It is found in the chloroplast. It catalyses the reaction RNA(n) + a ribonucleoside 5'-triphosphate = RNA(n+1) + diphosphate. Its function is as follows. DNA-dependent RNA polymerase catalyzes the transcription of DNA into RNA using the four ribonucleoside triphosphates as substrates. The polypeptide is DNA-directed RNA polymerase subunit beta' (Gossypium hirsutum (Upland cotton)).